The sequence spans 338 residues: Holliday junction branch migration complex subunit RuvB (338 aa).

The segment at 4–187 is large ATPase domain (RuvB-L); it reads ADRLIHAEPQ…FGIPLRLEFY (184 aa). ATP contacts are provided by residues arginine 27, glycine 68, lysine 71, threonine 72, threonine 73, 134-136, arginine 177, tyrosine 187, and arginine 224; that span reads EDY. Threonine 72 is a Mg(2+) binding site. Positions 188 to 258 are small ATPAse domain (RuvB-S); it reads NVKDLSSIVT…VAELALDMLD (71 aa). The tract at residues 261 to 338 is head domain (RuvB-H); it reads SEGFDYMDRK…RHFDIIQPEK (78 aa). 3 residues coordinate DNA: arginine 297, arginine 316, and arginine 321.

It belongs to the RuvB family. As to quaternary structure, homohexamer. Forms an RuvA(8)-RuvB(12)-Holliday junction (HJ) complex. HJ DNA is sandwiched between 2 RuvA tetramers; dsDNA enters through RuvA and exits via RuvB. An RuvB hexamer assembles on each DNA strand where it exits the tetramer. Each RuvB hexamer is contacted by two RuvA subunits (via domain III) on 2 adjacent RuvB subunits; this complex drives branch migration. In the full resolvosome a probable DNA-RuvA(4)-RuvB(12)-RuvC(2) complex forms which resolves the HJ.

It localises to the cytoplasm. It catalyses the reaction ATP + H2O = ADP + phosphate + H(+). Its function is as follows. The RuvA-RuvB-RuvC complex processes Holliday junction (HJ) DNA during genetic recombination and DNA repair, while the RuvA-RuvB complex plays an important role in the rescue of blocked DNA replication forks via replication fork reversal (RFR). RuvA specifically binds to HJ cruciform DNA, conferring on it an open structure. The RuvB hexamer acts as an ATP-dependent pump, pulling dsDNA into and through the RuvAB complex. RuvB forms 2 homohexamers on either side of HJ DNA bound by 1 or 2 RuvA tetramers; 4 subunits per hexamer contact DNA at a time. Coordinated motions by a converter formed by DNA-disengaged RuvB subunits stimulates ATP hydrolysis and nucleotide exchange. Immobilization of the converter enables RuvB to convert the ATP-contained energy into a lever motion, pulling 2 nucleotides of DNA out of the RuvA tetramer per ATP hydrolyzed, thus driving DNA branch migration. The RuvB motors rotate together with the DNA substrate, which together with the progressing nucleotide cycle form the mechanistic basis for DNA recombination by continuous HJ branch migration. Branch migration allows RuvC to scan DNA until it finds its consensus sequence, where it cleaves and resolves cruciform DNA. The sequence is that of Holliday junction branch migration complex subunit RuvB from Shewanella woodyi (strain ATCC 51908 / MS32).